A 125-amino-acid chain; its full sequence is Phosphoribosyl-AMP cyclohydrolase (125 aa).

D74 lines the Mg(2+) pocket. Residue C75 coordinates Zn(2+). Mg(2+)-binding residues include D76 and D78. The Zn(2+) site is built by C92 and C99.

This sequence belongs to the PRA-CH family. In terms of assembly, homodimer. The cofactor is Mg(2+). Zn(2+) serves as cofactor.

It is found in the cytoplasm. The catalysed reaction is 1-(5-phospho-beta-D-ribosyl)-5'-AMP + H2O = 1-(5-phospho-beta-D-ribosyl)-5-[(5-phospho-beta-D-ribosylamino)methylideneamino]imidazole-4-carboxamide. The protein operates within amino-acid biosynthesis; L-histidine biosynthesis; L-histidine from 5-phospho-alpha-D-ribose 1-diphosphate: step 3/9. Functionally, catalyzes the hydrolysis of the adenine ring of phosphoribosyl-AMP. This Trichlorobacter lovleyi (strain ATCC BAA-1151 / DSM 17278 / SZ) (Geobacter lovleyi) protein is Phosphoribosyl-AMP cyclohydrolase.